The chain runs to 973 residues: NLR family member X1 (973 aa).

The N-terminal 84 residues, 1 to 84 (MRWGCHLPRT…EAIQRHRRNL (84 aa)), are a transit peptide targeting the mitochondrion. The segment at 73–554 (ATEAIQRHRR…RILPLLFNLL (482 aa)) is required for interaction with MAVS. One can recognise an NACHT domain in the interval 158 to 481 (QTVVLYGTVG…LRFFLAPCVE (324 aa)). 164 to 171 (GTVGTGKS) contributes to the ATP binding site. The required for the repression of MAVS-induced interferon signaling stretch occupies residues 554–972 (LKVVPRVFGR…TLLEQLGGSG (419 aa)). An LRRNT domain is found at 665–692 (RQVLPPSELLDHLFFHYEFQNQRFSAEV). LRR repeat units lie at residues 693-716 (LGSL…VVAS), 722-745 (RHPL…TLMP), 747-775 (LLRA…LLHD), 776-799 (QCQI…VLMD), 809-832 (HLSL…LDRN), 833-855 (KQLQ…ALAK), 856-875 (AARK…ELSS), and 876-897 (EGRQ…VVAS). Residues 904-968 (VSEYWSVILS…SEVKTLLEQL (65 aa)) enclose the LRRCT domain.

It belongs to the NLRP family. In terms of assembly, homohexamer. Interacts with MAVS. Interacts with TUFM.

It is found in the mitochondrion outer membrane. Participates in antiviral signaling. Acts as a negative regulator of MAVS-mediated antiviral responses, through the inhibition of the virus-induced RLH (RIG-like helicase)-MAVS interaction. Instead, promotes autophagy by interacting with TUFM and subsequently recruiting the autophagy-related proteins ATG5 and ATG12. Also regulates MAVS-dependent NLRP3 inflammasome activation to attenuate apoptosis. Has no inhibitory function on NF-kappa-B signaling pathway, but enhances NF-kappa-B and JUN N-terminal kinase dependent signaling through the production of reactive oxygen species. Regulates viral mediated-inflammation and energy metabolism in a sex-dependent manner. In females, prevents uncontrolled inflammation and energy metabolism and thus, may contribute to the sex differences observed in infectious and inflammatory diseases. This is NLR family member X1 (Nlrx1) from Rattus norvegicus (Rat).